The chain runs to 250 residues: Zinc finger protein lsy-27 (250 aa).

C2H2-type zinc fingers lie at residues F25–H48 and H52–H75. The segment at F81–Q104 adopts a C2H2-type 3; degenerate zinc-finger fold. 2 disordered regions span residues I126–R177 and Q226–E250. Positions S148–S165 are enriched in low complexity. The span at M239–E250 shows a compositional bias: basic and acidic residues.

Its function is as follows. Involved in regulating left/right asymmetric differentiation of the gustatory ASE neurons. Plays a role in modulating expression of LIM/homeobox protein lim-6. This Caenorhabditis elegans protein is Zinc finger protein lsy-27.